A 160-amino-acid chain; its full sequence is Large ribosomal subunit protein eL21B (160 aa).

Residue K32 forms a Glycyl lysine isopeptide (Lys-Gly) (interchain with G-Cter in ubiquitin) linkage.

It belongs to the eukaryotic ribosomal protein eL21 family. As to quaternary structure, component of the large ribosomal subunit (LSU). Mature yeast ribosomes consist of a small (40S) and a large (60S) subunit. The 40S small subunit contains 1 molecule of ribosomal RNA (18S rRNA) and 33 different proteins (encoded by 57 genes). The large 60S subunit contains 3 rRNA molecules (25S, 5.8S and 5S rRNA) and 46 different proteins (encoded by 81 genes).

Its subcellular location is the cytoplasm. Functionally, component of the ribosome, a large ribonucleoprotein complex responsible for the synthesis of proteins in the cell. The small ribosomal subunit (SSU) binds messenger RNAs (mRNAs) and translates the encoded message by selecting cognate aminoacyl-transfer RNA (tRNA) molecules. The large subunit (LSU) contains the ribosomal catalytic site termed the peptidyl transferase center (PTC), which catalyzes the formation of peptide bonds, thereby polymerizing the amino acids delivered by tRNAs into a polypeptide chain. The nascent polypeptides leave the ribosome through a tunnel in the LSU and interact with protein factors that function in enzymatic processing, targeting, and the membrane insertion of nascent chains at the exit of the ribosomal tunnel. This chain is Large ribosomal subunit protein eL21B, found in Saccharomyces cerevisiae (strain ATCC 204508 / S288c) (Baker's yeast).